The following is a 427-amino-acid chain: uncharacterized protein (427 aa).

The protein belongs to the CAF1 family.

This is an uncharacterized protein from Schizosaccharomyces pombe (strain 972 / ATCC 24843) (Fission yeast).